The primary structure comprises 507 residues: Cyclic GMP-AMP synthase (507 aa).

The segment at 1–146 is DNA-binding; the sequence is MEDPRRRTTA…PRAPRGSRKE (146 aa). The segment at 1–151 is disordered; that stretch reads MEDPRRRTTA…GSRKEPDKLK (151 aa). The segment covering 7–18 has biased composition (basic residues); the sequence is RTTAPRAKKPSA. The segment covering 44–57 has biased composition (basic and acidic residues); sequence RRAERDGDTTEKPR. Residues 48-59 form a required for association with the cell membrane region; that stretch reads RDGDTTEKPRAP. Thr-52 carries the phosphothreonine modification. The segment at 119 to 132 is required for activation upon DNA viral infection; the sequence is RKVVRGPSHRRGAR. Over residues 121-131 the composition is skewed to basic residues; it reads VVRGPSHRRGA. The Nuclear export signal motif lies at 154–159; sequence LDKLRL. Lys-156 carries the N6-lactoyllysine modification. A DNA-binding region spans residues 158-201; it reads RLKRKDISEAAETVNKVVERLLRRMQKRESEFKGVEQLNTGSYY. Residue Glu-176 is modified to PolyADP-ribosyl glutamic acid. Residue Thr-197 participates in GTP binding. Residue Ser-199 participates in ATP binding. Phosphoserine is present on Ser-199. At Tyr-201 the chain carries Phosphotyrosine. 2 residues coordinate Mg(2+): Glu-211 and Asp-213. Position 213 (Asp-213) interacts with 2',3'-cGAMP. Lys-217 is covalently cross-linked (Glycyl lysine isopeptide (Lys-Gly) (interchain with G-Cter in SUMO)). Residue Lys-271 forms a Glycyl lysine isopeptide (Lys-Gly) (interchain with G-Cter in ubiquitin) linkage. At Glu-272 the chain carries 5-glutamyl polyglutamate. Residues 281-291 carry the Nuclear localization signal motif; that stretch reads DVSVEKEKPGS. Position 290 (Gly-290) interacts with 2',3'-cGAMP. Ser-291 is modified (phosphoserine; by CDK1 and PKB). At Glu-302 the chain carries 5-glutamyl glutamate. Residue Asp-307 coordinates GTP. Mg(2+) is bound at residue Asp-307. Asp-307 serves as a coordination point for 2',3'-cGAMP. The interaction with collided ribosomes stretch occupies residues 329 to 370; the sequence is QGWLGTKVRTNLRREPFYLVPKNAKDGNSFQGETWRLSFSHT. Residue Lys-335 forms a Glycyl lysine isopeptide (Lys-Gly) (interchain with G-Cter in SUMO); alternate linkage. Lys-335 participates in a covalent cross-link: Glycyl lysine isopeptide (Lys-Gly) (interchain with G-Cter in ubiquitin); alternate. 2',3'-cGAMP contacts are provided by residues Lys-350 and 364-366; that span reads RLS. 364 to 371 contacts GTP; sequence RLSFSHTE. Position 371 (Glu-371) interacts with ATP. Residue Lys-372 forms a Glycyl lysine isopeptide (Lys-Gly) (interchain with G-Cter in SUMO); alternate linkage. A Glycyl lysine isopeptide (Lys-Gly) (interchain with G-Cter in ubiquitin); alternate cross-link involves residue Lys-372. Residue Lys-372 is modified to N6-acetyllysine. The tract at residues 372–395 is DNA-binding; the sequence is KYILNNHGIEKTCCESSGAKCCRK. His-378 is a binding site for Zn(2+). A Glycyl lysine isopeptide (Lys-Gly) (interchain with G-Cter in SUMO) cross-link involves residue Lys-382. Lys-382 carries the post-translational modification N6-acetyllysine. Positions 384, 385, and 392 each coordinate Zn(2+). 2 S-palmitoyl cysteine lipidation sites follow: Cys-392 and Cys-393. Glycyl lysine isopeptide (Lys-Gly) (interchain with G-Cter in ubiquitin) cross-links involve residues Lys-399, Lys-402, Lys-409, and Lys-410. Lys-402 contributes to the ATP binding site. Lys-402 carries the post-translational modification N6-acetyllysine. Ser-420 carries the post-translational modification Phosphoserine. 420–424 lines the ATP pocket; sequence SYHVK. Cys-459 carries the S-palmitoyl cysteine lipid modification. Residue Lys-464 forms a Glycyl lysine isopeptide (Lys-Gly) (interchain with G-Cter in SUMO); alternate linkage. Lys-464 participates in a covalent cross-link: Glycyl lysine isopeptide (Lys-Gly) (interchain with G-Cter in ubiquitin); alternate. Lys-491 carries the post-translational modification N6-methyllysine.

It belongs to the mab-21 family. Monomer in the absence of DNA. Homodimer in presence of dsDNA: forms a 2:2 dimer with two enzymes binding to two DNA molecules. Interacts with nucleosomes; interaction is mainly mediated via histones H2A and H2B and inactivates the nucleotidyltransferase activity by blocking DNA-binding and subsequent activation. Interacts with PQBP1 (via WW domain). Interacts with TRIM14; this interaction recruits USP14, leading to deubiquitinate and stabilize CGAS and promote type I interferon production. Interacts with ZCCHC3; promoting sensing of dsDNA by CGAS. Interacts (when not monomethylated) with (poly-ADP-ribosylated) PARP1; interaction takes place in the nucleus and prevents the formation of the PARP1-TIMELESS complex. Interacts (when monomethylated) with SGF29; interaction with SGF29 prevents interaction with PARP1. Interacts with PCBP2; preventing the formation of liquid-like droplets in which CGAS is activated. Interacts with Irgm1; promoting CGAS degradation. Interacts with DDX41. Mg(2+) is required as a cofactor. Requires Mn(2+) as cofactor. It depends on Zn(2+) as a cofactor. The N-terminal disordered part (1-146) is phosphorylated by AURKB during the G2-M transition, blocking CGAS liquid phase separation and preventing activation. Phosphorylation at Tyr-201 by BLK promotes cytosolic retention. Localizes into the nucleus following dephosphorylation at Tyr-201. Phosphorylation at Ser-420 activates the nucleotidyltransferase activity. Dephosphorylation at Ser-420 by PPP6C impairs its ability to bind GTP, thereby inactivating it. Phosphorylation at Thr-52 and Ser-199 by PRKDC inhibits its cyclic GMP-AMP synthase activity by impairing homodimerization and activation. Phosphorylation at Ser-291 by AKT (AKT1, AKT2 or AKT3) suppresses the nucleotidyltransferase activity. Phosphorylation at Ser-291 by CDK1 during mitosis leads to its inhibition, thereby preventing CGAS activation by self-DNA during mitosis. Dephosphorylated at Ser-291 by protein phosphatase PP1 upon mitotic exit. In terms of processing, ubiquitinated at Lys-402 via 'Lys-48'-linked polyubiquitin chains, leading to its SQSTM1-mediated autophagic degradation. Interaction with TRIM14 promotes recruitment of USP14, leading to deubiquitinate Lys-402 and stabilize CGAS. Ubiquitinated at Lys-372 by RNF185 via 'Lys-27'-linked polyubiquitination, promoting CGAS cyclic GMP-AMP synthase activity. Monoubiquitination at Lys-335 by TRIM56 promotes oligomerization and subsequent activation. Monoubiquitination by TRIM41 promotes CGAS activation. Ubiquitination at Lys-271 and Lys-464 via 'Lys-48'-linked polyubiquitination promotes its degradation. Deubiquitination at Lys-271 by USP29 promotes its stabilization. Deubiquitinated by USP27X, promoting its stabilization. Ubiquitinated at Lys-399 via 'Lys-63'-linked polyubiquitin chains by MARCHF8, leading to the inhibition of its DNA binding ability. In cycling cells, nucleosome-bound CGAS is ubiquitinated at Lys-409 and Lys-410 via 'Lys-48'-linked polyubiquitin chains by the ECS(SPSB3) complex, leading to its degradation: ubiquitination and degradation of nuclear CGAS during G1 and G2 phases is required to promote low intranuclear CGAS abundance before the next mitotic cycle. Post-translationally, sumoylated at Lys-217 and Lys-464 by TRIM38 in uninfected cells and during the early phase of viral infection, promoting its stability by preventing ubiquitination at Lys-271 and Lys-464, and subsequent degradation. Desumoylated by SENP2 during the late phase of viral infection. Sumoylation at Lys-335, Lys-372 and Lys-382 prevents DNA-binding, oligomerization and nucleotidyltransferase activity. Desumoylation at Lys-335, Lys-372 and Lys-382 by SENP7 relieves inhibition and activates CGAS. Polyglutamylated by TTLL6 at Glu-272, leading to impair DNA-binding activity. Monoglutamylated at Glu-302 by TTLL4, leading to impair the nucleotidyltransferase activity. Deglutamylated by AGBL5/CCP5 and AGBL6/CCP6. In terms of processing, acetylation at Lys-372, Lys-382 and Lys-402 inhibits the cyclic GMP-AMP synthase activity. Deacetylated upon cytosolic DNA challenge such as viral infections. Acetylation by KAT5 increases the cyclic GMP-AMP synthase activity by promoting DNA-binding and subsequent activation. Post-translationally, proteolytically cleaved by apoptotic caspases during apoptosis, leading to its inactivation. The damage of the nucleus and the mitochondria during apoptosis leads to leakage of nuclear and mitochondrial DNA, which activate CGAS: cleavage and inactivation during apoptosis in required to prevent cytokine overproduction. Cleaved by CASP7 and CASP3 during virus-induced apoptosis, thereby inactivating it and preventing cytokine overproduction. Cleaved by CASP1 upon DNA virus infection; the cleavage impairs cGAMP production. Also cleaved by the pyroptotic CASP4 during non-canonical inflammasome activation; does not cut at the same sites than CASP1. Degraded via selective autophagy following interaction with Irgm1. Irgm1 promotes CGAS recruitment to autophagosome membranes, promoting its SQSTM1/p62-dependent autophagic degradation. In terms of processing, poly-ADP-ribosylation at Glu-176 by PARP1 impairs DNA-binding, thereby preventing the cyclic GMP-AMP synthase activity. Post-translationally, palmitoylation at Cys-459 by ZDHHC18 impairs DNA-binding, thereby preventing the cyclic GMP-AMP synthase activity. Palmitoylation at Cys-392 and Cys-393 by ZDHHC9 promotes homodimerization and cyclic GMP-AMP synthase activity. Depalmitoylation at Cys-392 and Cys-393 by LYPLAL1 impairs homodimerization and cyclic GMP-AMP synthase activity. Monomethylated at Lys-491 by SETD7. Monomethylation promotes interaction with SGF29, preventing interaction between PARP1 nad SGF29. Demethylation by RIOX1 promotes interaction with PARP1, followed by PARP1 inactivation. In terms of processing, lactylation by AARS2 prevents ability to undergo liquid-liquid phase separation (LLPS), thereby inhibiting CGAS activation.

It localises to the nucleus. Its subcellular location is the chromosome. The protein localises to the cell membrane. The protein resides in the cytoplasm. It is found in the cytosol. The catalysed reaction is GTP + ATP = 2',3'-cGAMP + 2 diphosphate. It catalyses the reaction GTP + ATP = pppGp(2'-5')A + diphosphate. The enzyme catalyses pppGp(2'-5')A = 2',3'-cGAMP + diphosphate. The enzyme activity is strongly increased by double-stranded DNA (dsDNA), but not by single-stranded DNA or RNA. DNA-binding induces the formation of liquid-like droplets in which CGAS is activated. Liquid-like droplets also create a selective environment that restricts entry of negative regulators, such as TREX1 or BANF1/BAF, allowing sensing of DNA. A number of mechanisms exist to restrict its activity toward self-DNA. The nucleotidyltransferase activity is inhibited in the nucleus via its association with nucleosomes: interacts with the acidic patch of histones H2A and H2B, thereby blocking DNA-binding and subsequent activation. CGAS is also inactive when associated with mitotic chromatin. Chromatin-bound CGAS cannot be activated by exogenous DNA in mitotic cells: phosphorylation of the N-terminal disordered part by AURKB during the G2-M transition blocks CGAS liquid phase separation and activation. Activity toward self-DNA is inhibited by BANF1/BAF upon acute loss of nuclear membrane integrity: BANF1/BAF acts by outcompeting CGAS for DNA-binding, thereby preventing CGAS activation. DNA-induced activation at micronuclei is also limited by TREX1, which degrades micronuclear DNA upon nuclear envelope rupture, thereby preventing CGAS activation. CGAS can be released from nucleosomes and activated by MRE11 component of the MRN complex, which displaces CGAS from acidic-patch-mediated sequestration. Acetylation at Lys-372, Lys-382 and Lys-402 inhibits the cyclic GMP-AMP synthase activity. Acetylation by KAT5 increases the cyclic GMP-AMP synthase activity by promoting DNA-binding and subsequent activation. Phosphorylation at Ser-291 suppresses the nucleotidyltransferase activity. Phosphorylation at Ser-420 promotes the cyclic GMP-AMP synthase activity. Phosphorylation at Thr-52 and Ser-199 inhibits its cyclic GMP-AMP synthase activity. Ubiquitination at Lys-372 via 'Lys-27'-linked polyubiquitination enhances the cyclic GMP-AMP synthase activity. Monoubiquitination at Lys-335 promotes oligomerization and subsequent activation. Sumoylation at Lys-335, Lys-372 and Lys-382 prevents DNA-binding, oligomerization and nucleotidyltransferase activity. The enzyme activity is impaired by the cleavage by CASP1. In addition to DNA, also activated by collided ribosomes upon translation stress: specifically binds collided ribosomes, promoting its activation and triggering type-I interferon production. In hematopoietic stem cells, binding to circular RNA cia-cGAS inhibits the cyclic GMP-AMP synthase activity. Strongly inhibited by compound RU.521, which is specific for mouse protein. Its function is as follows. Nucleotidyltransferase that catalyzes the formation of cyclic GMP-AMP (2',3'-cGAMP) from ATP and GTP and plays a key role in innate immunity. Catalysis involves both the formation of a 2',5' phosphodiester linkage at the GpA step and the formation of a 3',5' phosphodiester linkage at the ApG step, producing c[G(2',5')pA(3',5')p]. Acts as a key DNA sensor: directly binds double-stranded DNA (dsDNA), inducing the formation of liquid-like droplets in which CGAS is activated, leading to synthesis of 2',3'-cGAMP, a second messenger that binds to and activates STING1, thereby triggering type-I interferon production. Preferentially binds long dsDNA (around 45 bp) and forms ladder-like networks that function cooperatively to stabilize individual cGAS-dsDNA complexes. Acts as a key foreign DNA sensor, the presence of double-stranded DNA (dsDNA) in the cytoplasm being a danger signal that triggers the immune responses. Has antiviral activity by sensing the presence of dsDNA from DNA viruses in the cytoplasm. Also acts as an innate immune sensor of infection by retroviruses by detecting the presence of reverse-transcribed DNA in the cytosol. Detection of retroviral reverse-transcribed DNA in the cytosol may be indirect and be mediated via interaction with PQBP1, which directly binds reverse-transcribed retroviral DNA. Also detects the presence of DNA from bacteria. 2',3'-cGAMP can be transferred from producing cells to neighboring cells through gap junctions, leading to promote STING1 activation and convey immune response to connecting cells. 2',3'-cGAMP can also be transferred between cells by virtue of packaging within viral particles contributing to IFN-induction in newly infected cells in a cGAS-independent but STING1-dependent manner. Also senses the presence of neutrophil extracellular traps (NETs) that are translocated to the cytosol following phagocytosis, leading to synthesis of 2',3'-cGAMP. In addition to foreign DNA, can also be activated by endogenous nuclear or mitochondrial DNA. When self-DNA leaks into the cytosol during cellular stress (such as mitochondrial stress, DNA damage, mitotic arrest or senescence), or is present in form of cytosolic micronuclei, CGAS is activated leading to a state of sterile inflammation. Acts as a regulator of cellular senescence by binding to cytosolic chromatin fragments that are present in senescent cells, leading to trigger type-I interferon production via STING1 and promote cellular senescence. Also involved in the inflammatory response to genome instability and double-stranded DNA breaks: acts by localizing to micronuclei arising from genome instability. Micronuclei, which as frequently found in cancer cells, consist of chromatin surrounded by its own nuclear membrane: following breakdown of the micronuclear envelope, a process associated with chromothripsis, CGAS binds self-DNA exposed to the cytosol, leading to 2',3'-cGAMP synthesis and subsequent activation of STING1 and type-I interferon production. In a healthy cell, CGAS is however kept inactive even in cellular events that directly expose it to self-DNA, such as mitosis, when cGAS associates with chromatin directly after nuclear envelope breakdown or remains in the form of postmitotic persistent nuclear cGAS pools bound to chromatin. Nuclear CGAS is inactivated by chromatin via direct interaction with nucleosomes, which block CGAS from DNA binding and thus prevent CGAS-induced autoimmunity. Also acts as a suppressor of DNA repair in response to DNA damage: inhibits homologous recombination repair by interacting with PARP1, the CGAS-PARP1 interaction leading to impede the formation of the PARP1-TIMELESS complex. In addition to DNA, also sense translation stress: in response to translation stress, translocates to the cytosol and associates with collided ribosomes, promoting its activation and triggering type-I interferon production. This chain is Cyclic GMP-AMP synthase, found in Mus musculus (Mouse).